Consider the following 146-residue polypeptide: Large ribosomal subunit protein uL15x (146 aa).

Composition is skewed to basic residues over residues 1–14 and 21–30; these read MTTR…KRGH and RIGKHRKHPG. Positions 1–35 are disordered; it reads MTTRFKKNRKKRGHVSAGHGRIGKHRKHPGGRGNA.

It belongs to the universal ribosomal protein uL15 family.

This Arabidopsis thaliana (Mouse-ear cress) protein is Large ribosomal subunit protein uL15x (RPL27AC).